The chain runs to 934 residues: Progesterone receptor (934 aa).

Residues 1–49 form a disordered region; it reads MTELKSKGPRAPHVAGGPPSPEVGSPLLCRPAAGPFQGSQTSDTLPEVS. Residues 1-164 form an AF3; mediates transcriptional activation region; it reads MTELKSKGPR…PATQRVLSPL (164 aa). A modulating, Pro-Rich region spans residues 1 to 567; sequence MTELKSKGPR…YSFESLPQKI (567 aa). At serine 20 the chain carries Phosphoserine. The LXXL motif 1 motif lies at 55–59; it reads LDGLL. Residues 61-239 are disordered; the sequence is PRLCQGQDPP…EDSAGPLLKG (179 aa). Phosphoserine is present on serine 81. The short motif at 115–119 is the LXXL motif 2 element; it reads LDTLL. Serine 130 and serine 162 each carry phosphoserine. The segment at 165–305 is mediates transcriptional transrepression; it reads MSRSGGKTED…LATTMMDFIH (141 aa). Positions 183-187 match the Nuclear localization signal motif; sequence KVLPR. At serine 190 the chain carries Phosphoserine. The span at 191 to 203 shows a compositional bias: polar residues; sequence PSRQLLLPTSGSP. Phosphoserine is present on serine 213. Acidic residues predominate over residues 220–231; that stretch reads EVEEEDGSESED. Phosphoserine; by MAPK1 is present on serine 294. Residues 331–375 are disordered; that stretch reads GGAGAASAFAPPQSSPSASSTPVAVGDFPDCAYPPDAEPKDNAYP. The segment covering 335–350 has biased composition (low complexity); it reads AASAFAPPQSSPSASS. At serine 345 the chain carries Phosphoserine; by MAPK. Residue lysine 388 forms a Glycyl lysine isopeptide (Lys-Gly) (interchain with G-Cter in SUMO); alternate linkage. Residue lysine 388 forms a Glycyl lysine isopeptide (Lys-Gly) (interchain with G-Cter in ubiquitin); alternate linkage. The residue at position 400 (serine 400) is a Phosphoserine; by CDK2. Positions 415–454 are disordered; that stretch reads PDFPLGPPPQLPPRAPPSRPGEAAVTAAPASASVSSASSP. A compositionally biased stretch (pro residues) spans 418–433; that stretch reads PLGPPPQLPPRAPPSR. Positions 434–454 are enriched in low complexity; it reads PGEAAVTAAPASASVSSASSP. The AF1; mediates transcriptional activation stretch occupies residues 456-547; sequence STLECILYKA…VYPPYLNYLR (92 aa). Lysine 532 is covalently cross-linked (Glycyl lysine isopeptide (Lys-Gly) (interchain with G-Cter in SUMO)). 2 consecutive NR C4-type zinc fingers follow at residues 568 to 588 and 604 to 628; these read CLIC…CGSC and CAGR…LRKC. A DNA-binding region (nuclear receptor) is located at residues 568 to 640; the sequence is CLICGDEASG…AGMVLGGRKF (73 aa). Residue serine 677 is modified to Phosphoserine. One can recognise an NR LBD domain in the interval 680–914; it reads QDIQLIPPLI…EFPEMMSEVI (235 aa). The tract at residues 688–934 is AF2; mediates transcriptional activation; it reads LIKLLMSIEP…MVKPLLFHKK (247 aa). Arginine 767 lines the progesterone pocket.

This sequence belongs to the nuclear hormone receptor family. In terms of assembly, interacts with SMARD1 and UNC45A. Interacts with CUEDC2; the interaction promotes ubiquitination, decreases sumoylation, and represses transcriptional activity. Interacts with PIAS3; the interaction promotes sumoylation of PR in a hormone-dependent manner, inhibits DNA-binding, and alters nuclear export. Interacts with SP1; the interaction requires ligand-induced phosphorylation on Ser-345 by ERK1/2-MAPK. Interacts with PRMT2. Interacts with NCOA2 and NCOA1. Interacts with KLF9. Interacts with GTF2B. Phosphorylated on multiple serine sites. Several of these sites are hormone-dependent. Phosphorylation on Ser-294 is highly hormone-dependent and modulates ubiquitination and sumoylation on Lys-388. Phosphorylation on Ser-345 also requires induction by hormone. Basal phosphorylation on Ser-81, Ser-162, Ser-190 and Ser-400 is increased in response to progesterone and can be phosphorylated in vitro by the CDK2-A1 complex. Increased levels of phosphorylation on Ser-400 also in the presence of EGF, heregulin, IGF, PMA and FBS. Phosphorylation at this site by CDK2 is ligand-independent, and increases nuclear translocation and transcriptional activity. Phosphorylation at Ser-162 and Ser-294, but not at Ser-190, is impaired during the G(2)/M phase of the cell cycle. Phosphorylation on Ser-345 by ERK1/2 MAPK is required for interaction with SP1. In terms of processing, sumoylation is hormone-dependent and represses transcriptional activity. Sumoylation on all three sites is enhanced by PIAS3. Desumoylated by SENP1. Sumoylation on Lys-388, the main site of sumoylation, is repressed by ubiquitination on the same site, and modulated by phosphorylation at Ser-294. Post-translationally, ubiquitination is hormone-dependent and represses sumoylation on the same site. Promoted by MAPK-mediated phosphorylation on Ser-294. Ubiquitinated by UBR5, leading to its degradation: UBR5 specifically recognizes and binds ligand-bound PGR when it is not associated with coactivators (NCOAs). In presence of NCOAs, the UBR5-degron is not accessible, preventing its ubiquitination and degradation. Palmitoylated by ZDHHC7 and ZDHHC21. Palmitoylation is required for plasma membrane targeting and for rapid intracellular signaling via ERK and AKT kinases and cAMP generation.

The protein localises to the nucleus. It localises to the cytoplasm. In terms of biological role, the steroid hormones and their receptors are involved in the regulation of eukaryotic gene expression and affect cellular proliferation and differentiation in target tissues. Transcriptional activator of several progesteron-dependent promoters in a variety of cell types. Involved in activation of SRC-dependent MAPK signaling on hormone stimulation. The sequence is that of Progesterone receptor (PGR) from Colobus guereza (Mantled guereza).